A 198-amino-acid polypeptide reads, in one-letter code: Interferon gamma (198 aa).

Positions 1–23 (MMVSTARAVVCLSLCLCVCQVRG) are cleaved as a signal peptide. N31, N42, and N174 each carry an N-linked (GlcNAc...) asparagine glycan. The disordered stretch occupies residues 173-198 (SNNTKMQRRRRRRRRQARKVKTPTRA). Residues 178–198 (MQRRRRRRRRQARKVKTPTRA) are compositionally biased toward basic residues.

It belongs to the type II (or gamma) interferon family. Homodimer.

The protein resides in the secreted. In terms of biological role, cytokine which binds to interferon gamma receptor 1 (ifngr1). Also binds with lower affinity to interferon gamma receptor 1-like (ifngr1l). Has activating effects on macrophages and neutrophils. The chain is Interferon gamma from Paralichthys olivaceus (Bastard halibut).